We begin with the raw amino-acid sequence, 358 residues long: Anhydro-N-acetylmuramic acid kinase (358 aa).

9–16 contacts ATP; that stretch reads GTSLDGVD.

The protein belongs to the anhydro-N-acetylmuramic acid kinase family.

The catalysed reaction is 1,6-anhydro-N-acetyl-beta-muramate + ATP + H2O = N-acetyl-D-muramate 6-phosphate + ADP + H(+). The protein operates within amino-sugar metabolism; 1,6-anhydro-N-acetylmuramate degradation. It participates in cell wall biogenesis; peptidoglycan recycling. Its function is as follows. Catalyzes the specific phosphorylation of 1,6-anhydro-N-acetylmuramic acid (anhMurNAc) with the simultaneous cleavage of the 1,6-anhydro ring, generating MurNAc-6-P. Is required for the utilization of anhMurNAc either imported from the medium or derived from its own cell wall murein, and thus plays a role in cell wall recycling. This Acidiphilium cryptum (strain JF-5) protein is Anhydro-N-acetylmuramic acid kinase.